The following is a 366-amino-acid chain: cAMP-dependent protein kinase regulatory subunit (366 aa).

The tract at residues 1 to 121 (MSGGNEEDQL…SLESAMRKNL (121 aa)) is dimerization and phosphorylation. Residues 55–87 (QRAQEGGNPDAADDDDIIVEPPKRSGGRRTGIS) form a disordered region. The Pseudophosphorylation motif signature appears at 82–86 (RRTGI). S87 is subject to Phosphoserine. 3',5'-cyclic AMP contacts are provided by residues 122–239 (LFAH…SKVQ), E187, R196, 240–366 (ILAD…KLMT), E311, and R320.

This sequence belongs to the cAMP-dependent kinase regulatory chain family. Tetramer, composed of 2 regulatory (R) and 2 catalytic (C) subunits. In the presence of cAMP it dissociates into 2 active monomeric C subunits and an R dimer that binds four cAMP molecules. The pseudophosphorylation site binds to the substrate-binding region of the catalytic chain but is not phosphorylated. The physiological significance of phosphorylations by other kinases is unclear.

The protein localises to the cytoplasm. It is found in the cytosol. Controls the rhythmic contraction of enteric muscles probably by regulating G-protein coupled receptor aex-2-mediated calcium influx in GABAergic DVB neurons. The protein is cAMP-dependent protein kinase regulatory subunit (kin-2) of Caenorhabditis elegans.